A 235-amino-acid chain; its full sequence is Sugar fermentation stimulation protein homolog (235 aa).

The protein belongs to the SfsA family.

The sequence is that of Sugar fermentation stimulation protein homolog from Aliivibrio fischeri (strain ATCC 700601 / ES114) (Vibrio fischeri).